The sequence spans 356 residues: Icosanoyl-CoA 5-desaturase (356 aa).

The chain crosses the membrane as a helical span at residues 5–25; it reads LYFPISISLSLSLEAMASFIA. A disordered region spans residues 38–58; the sequence is LDPKIPTKPEPKTETPKPKDD. The segment covering 42–58 has biased composition (basic and acidic residues); it reads IPTKPEPKTETPKPKDD. Transmembrane regions (helical) follow at residues 88–108 and 111–131; these read NAVTLLVLHALAAMAPFYFSW and FWISFILLGFASGVLGITLCF. Residues 132–137 carry the Histidine box-1 motif; that stretch reads HRCLTH. The Histidine box-2 motif lies at 169 to 173; sequence HRYHH. A helical transmembrane segment spans residues 236–256; that stretch reads ALIALLYYVGGFPYIVWGMGF. The Histidine box-3 signature appears at 302–306; sequence HNNHH.

The protein belongs to the fatty acid desaturase type 1 family. It depends on Fe(2+) as a cofactor.

It localises to the membrane. It catalyses the reaction eicosanoyl-CoA + 2 Fe(II)-[cytochrome b5] + O2 + 2 H(+) = (5Z)-eicosenoyl-CoA + 2 Fe(III)-[cytochrome b5] + 2 H2O. Its pathway is lipid metabolism; monounsaturated fatty acid biosynthesis. Its function is as follows. Desaturase involved in the biosynthesis of (5Z)-icos-5-enoate, an unusual monounsaturated fatty acid that makes up to 60% of the total fatty acids in Limnanthes sp. seed oil. Only acts on saturated fatty acids. The sequence is that of Icosanoyl-CoA 5-desaturase from Limnanthes douglasii (Douglas' meadowfoam).